We begin with the raw amino-acid sequence, 376 residues long: NADPH oxidase organizer 1 (376 aa).

Positions methionine 1–leucine 131 constitute a PX domain. SH3 domains are found at residues leucine 163–proline 225 and serine 237–leucine 296. The segment at glycine 302–glutamine 376 is disordered. Over residues alanine 326–proline 335 the composition is skewed to pro residues. The interval proline 328–proline 337 is proline-rich region; mediates mutually exclusive interactions with itself and NOXA1.

In terms of assembly, interacts with NOX1, NOXA1, CYBA/p22phox and NCF2/p67phox. Interacts with SH3PXD2A and SH3PXD2B. In terms of tissue distribution, expressed in testis, small and large intestines, liver, kidney and pancreas. Isoform 3 is mainly expressed in colon. Isoform 1 is preferentially expressed in testis.

Its subcellular location is the cell membrane. Constitutively potentiates the superoxide-generating activity of NOX1 and NOX3 and is required for the biogenesis of otoconia/otolith, which are crystalline structures of the inner ear involved in the perception of gravity. Isoform 3 is more potent than isoform 1 in activating NOX3. Together with NOXA1, may also substitute to NCF1/p47phox and NCF2/p67phox in supporting the phagocyte NOX2/gp91phox superoxide-generating activity. The chain is NADPH oxidase organizer 1 (NOXO1) from Homo sapiens (Human).